The chain runs to 500 residues: MSRSLTGALAHGFLGQSPLWYKAVICLFLVLNPLLLATIGPAAAGWALVIEFIFTLGMALKCYPLMPGGLLLIEALLLQMTTPQALYEELQHNFPVILLLMFMVAGIHFMKELLLFLFSRILLGVRSKAMLSLLFCVLSAFLSAFLDALTVTAVIISAAVGFYAVYHRVASGANPREDSALDSDQQVAQLHRDDLNQFRAFLRSLLMHGAVGTALGGVCTLVGEPQNLLIGHEMGWHFADFLLKVAPVSIPVLGAGLLTCVLLEKLRLFGYGTLMPETVRQVLAAYAAEDDAARTQAQRIALWVQGLAALILIICLGLHVAEVGLIGLMVIVLITAFTGITDEHRLGRAFQDAMPFTSLLVVFFAVVAVIHQQQLFSPLISWVLTLPAEQQPGMLYLANGLLSAISDNVFVATIYITEVKQAFLNGSMSREHFETLAVAINTGTNLPSVATPNGQAAFLFLLTSAIAPLIRLSYGRMVWMALPYTVVMGGLGWWAVTYWL.

13 helical membrane-spanning segments follow: residues 11–31, 34–54, 58–78, 96–116, 121–141, 145–165, 205–225, 241–261, 311–331, 350–370, 394–414, 450–470, and 477–497; these read HGFLGQSPLWYKAVICLFLVL, LLLATIGPAAAGWALVIEFIF, MALKCYPLMPGGLLLIEALLL, VILLLMFMVAGIHFMKELLLF, ILLGVRSKAMLSLLFCVLSAF, FLDALTVTAVIISAAVGFYAV, LLMHGAVGTALGGVCTLVGEP, FLLKVAPVSIPVLGAGLLTCV, ILIICLGLHVAEVGLIGLMVI, FQDAMPFTSLLVVFFAVVAVI, MLYLANGLLSAISDNVFVATI, ATPNGQAAFLFLLTSAIAPLI, and MVWMALPYTVVMGGLGWWAVT.

This sequence belongs to the NhaB Na(+)/H(+) (TC 2.A.34) antiporter family.

It localises to the cell inner membrane. It catalyses the reaction 2 Na(+)(in) + 3 H(+)(out) = 2 Na(+)(out) + 3 H(+)(in). Functionally, na(+)/H(+) antiporter that extrudes sodium in exchange for external protons. In Pseudomonas putida (strain ATCC 700007 / DSM 6899 / JCM 31910 / BCRC 17059 / LMG 24140 / F1), this protein is Na(+)/H(+) antiporter NhaB.